A 518-amino-acid polypeptide reads, in one-letter code: Motile sperm domain-containing protein 2 (518 aa).

Residues 1–496 lie on the Cytoplasmic side of the membrane; that stretch reads MAENHAQNKA…QVQRCIWFQQ (496 aa). Residues 82-239 enclose the CRAL-TRIO domain; that stretch reads ESSIPRWLLE…HMGGTDPFKY (158 aa). Positions 252–308 are disordered; it reads PLCENGPITSEDETSSKEDIESDGKETLETISNEEQTPLLKKINPTESTSKAEENEK. The span at 265–279 shows a compositional bias: basic and acidic residues; sequence TSSKEDIESDGKETL. One can recognise an MSP domain in the interval 327–445; sequence LLHISPAEEL…MEHRLRCHTV (119 aa). Positions 365–366 are required for FFAT motif binding and phosphorylated FFAT motif binding; the sequence is RT. The helical; Anchor for type IV membrane protein transmembrane segment at 497–518 threads the bilayer; sequence LLLSLTMLLLAFVTSFFYLLYS.

Homooligomer. Interacts (via MSP domain) with STARD3NL (via FFAT motif), RMDN3 (via FFAT motif), OSBPL1A (via FFAT motif) and CERT1 (via FFAT motif). Interacts (via MSP domain) with STARD3 (via phosphorylated FFAT motif); this interaction depends on the critical phosphorylation of STARD3 on 'Ser-209'. Interacts with RB1CC1 (via phosphorylated FFAT motif), MIGA2 (via phosphorylated FFAT motif) and OSBPL1A (via FFAT motif). As to expression, highly expressed in CD14(+) monocytes, and at lower levels in neutrophils. Does not show significant expression in B-cells or T-cells.

The protein resides in the endoplasmic reticulum membrane. In terms of biological role, endoplasmic reticulum-anchored protein that mediates the formation of contact sites between the endoplasmic (ER) and endosomes, mitochondria or Golgi through interaction with conventional- and phosphorylated-FFAT-containing organelle-bound proteins. In addition, forms endoplasmic reticulum (ER)-lipid droplets (LDs) contacts through a direct protein-membrane interaction and participates in LDs homeostasis. The attachment mechanism involves an amphipathic helix that has an affinity for lipid packing defects present at the surface of LDs. Promotes migration of primary monocytes and neutrophils, in response to various chemokines. In Homo sapiens (Human), this protein is Motile sperm domain-containing protein 2.